We begin with the raw amino-acid sequence, 397 residues long: MLKGMTRLVSRVHKLDPGRFSHLGTQAPQCPVAHLDNQVPTERTRAISRTLENDPAKHGEQHVGQHYNISIQELKTVFPHGLPPRFVMQVKTFNEACLMVRKPALELLHYLKNTNFAHPAVRYVLYGEKGTGKTLSLCHIIHFCAKQDWLILHIPDAHLWVKNCRDLLQSTYNKQRFDQPLEASIWLKNFKTANERFLSQIKVQDKYVWNKRESTEKGSPLAEVVEQGIMRVRNATDAVGIVLKELKRQSSLGVFRLLVAVDGVNALWGRTTLKREDKSPITPEELALIYNLRKMVKNDWQGGAIVLTVSQTGSLFKPRKAYLPQELLGKEGFDTLDPFIPILVSNYNPKEFEGCIQYYLENNWLQHEKAHTEEGKKELLFLSNRNPGLLERLCAYL.

The N-terminal 17 residues, 1–17, are a transit peptide targeting the mitochondrion; sequence MLKGMTRLVSRVHKLDP. N6-acetyllysine occurs at positions 174 and 206.

Belongs to the mitochondrion-specific ribosomal protein mS29 family. Component of the mitochondrial ribosome small subunit (28S) which comprises a 12S rRNA and about 30 distinct proteins. Interacts with DELE1. Interacts with NOA1.

The protein resides in the mitochondrion. The catalysed reaction is GTP + H2O = GDP + phosphate + H(+). In terms of biological role, as a component of the mitochondrial small ribosomal subunit, it plays a role in the translation of mitochondrial mRNAs. Involved in mediating interferon-gamma-induced cell death. Displays GTPase activity in vitro. The polypeptide is Small ribosomal subunit protein mS29 (Bos taurus (Bovine)).